A 93-amino-acid polypeptide reads, in one-letter code: Small ribosomal subunit protein uS19 (93 aa).

The protein belongs to the universal ribosomal protein uS19 family.

In terms of biological role, protein S19 forms a complex with S13 that binds strongly to the 16S ribosomal RNA. This chain is Small ribosomal subunit protein uS19 (rpsS), found in Helicobacter pylori (strain ATCC 700392 / 26695) (Campylobacter pylori).